We begin with the raw amino-acid sequence, 577 residues long: Gamma-tubulin complex component gfh1 (577 aa).

It belongs to the TUBGCP family.

Its subcellular location is the cytoplasm. It localises to the cytoskeleton. It is found in the microtubule organizing center. The protein localises to the spindle pole body. Its function is as follows. Required for proper anchoring of astral microtubules at the spindle pole bodies (SPBs), during anaphase, ensuring correct cell polarity. This chain is Gamma-tubulin complex component gfh1 (gfh1), found in Schizosaccharomyces pombe (strain 972 / ATCC 24843) (Fission yeast).